A 378-amino-acid polypeptide reads, in one-letter code: MKILVDENMPYARDLFSRLGEVIAVPGRPIPVAQLADADALMVRSVTKVNESLLAGKPIKFVGTATAGTDHVDEAWLKQAGIGFSAAPGCNAIAVVEYVFSSLLMLAERDGFSLHDRTVGIVGVGNVGRRLQARLEALGIKTLLCDPPRADRGDEGDFRSLDELVQRADILTFHTPLFKDGPYKTLHLADEKLIRSLKPGAILINACRGAVVDNTALLTCLNEGQKLSVVLDVWEGEPELNVELLTKVDIGTPHIAGYTLEGKARGTTQVFEAYSKFIGHEQHVALDTLLPAPEFGRITLHGPLDQPTLKRLVHLVYDVRRDDAPLRKVAGIPGEFDKLRKNYLERREWSSLYVICDDASAASLLCKLGFNAVHHPAR.

2 residues coordinate substrate: serine 45 and threonine 66. Residues aspartate 146 and threonine 175 each coordinate NAD(+). Residue arginine 208 is part of the active site. Aspartate 232 contributes to the NAD(+) binding site. The active site involves glutamate 237. Histidine 254 functions as the Proton donor in the catalytic mechanism. Glycine 257 contacts NAD(+). Tyrosine 258 contacts substrate.

The protein belongs to the D-isomer specific 2-hydroxyacid dehydrogenase family. PdxB subfamily. In terms of assembly, homodimer.

Its subcellular location is the cytoplasm. The enzyme catalyses 4-phospho-D-erythronate + NAD(+) = (R)-3-hydroxy-2-oxo-4-phosphooxybutanoate + NADH + H(+). It functions in the pathway cofactor biosynthesis; pyridoxine 5'-phosphate biosynthesis; pyridoxine 5'-phosphate from D-erythrose 4-phosphate: step 2/5. Catalyzes the oxidation of erythronate-4-phosphate to 3-hydroxy-2-oxo-4-phosphonooxybutanoate. In Shigella flexneri serotype 5b (strain 8401), this protein is Erythronate-4-phosphate dehydrogenase.